The sequence spans 158 residues: U4/U6.U5 small nuclear ribonucleoprotein 27 kDa protein (158 aa).

Positions 1–30 (MGRSRSRTPPRRERRRSRSSSRDRERRRRE) are enriched in basic residues. Residues 1 to 100 (MGRSRSRTPP…ISAEDMQGKT (100 aa)) are disordered. Residues 31 to 41 (RERSRSRDRDR) show a composition bias toward basic and acidic residues. Basic residues predominate over residues 42–62 (RRSRSRSPHRRRSRSPRRHRS). The segment covering 69-86 (RQKDRRDDDRKDVKEKPA) has biased composition (basic and acidic residues).

This sequence belongs to the SNUT3 family. Part of a tri-snRNP complex.

It localises to the nucleus. Its function is as follows. May play a role in mRNA splicing. The polypeptide is U4/U6.U5 small nuclear ribonucleoprotein 27 kDa protein (snrnp27) (Danio rerio (Zebrafish)).